We begin with the raw amino-acid sequence, 392 residues long: Phosphoglycerate kinase (392 aa).

Substrate contacts are provided by residues 21–23, R36, 59–62, R118, and R151; these read DFN and HLGR. ATP is bound by residues K202, E321, and 347 to 350; that span reads GGDS.

It belongs to the phosphoglycerate kinase family. Monomer.

Its subcellular location is the cytoplasm. The catalysed reaction is (2R)-3-phosphoglycerate + ATP = (2R)-3-phospho-glyceroyl phosphate + ADP. It participates in carbohydrate degradation; glycolysis; pyruvate from D-glyceraldehyde 3-phosphate: step 2/5. The chain is Phosphoglycerate kinase from Symbiobacterium thermophilum (strain DSM 24528 / JCM 14929 / IAM 14863 / T).